A 55-amino-acid chain; its full sequence is Photosystem II reaction center X protein (55 aa).

A helical transmembrane segment spans residues 24-44 (IGSFLAAAALIVVPAASFLLW).

It belongs to the PsbX family. Type 2 subfamily. In terms of assembly, PSII consists of a core antenna complex that captures photons, and an electron transfer chain that converts photonic excitation into a charge separation. PSII forms dimeric complexes.

It localises to the cellular thylakoid membrane. Its function is as follows. Involved in the binding and/or turnover of quinones at the Q(B) site of Photosystem II. This chain is Photosystem II reaction center X protein, found in Prochlorococcus marinus (strain SARG / CCMP1375 / SS120).